The sequence spans 184 residues: Peptidyl-tRNA hydrolase (184 aa).

Position 14 (Tyr14) interacts with tRNA. His19 serves as the catalytic Proton acceptor. Residues Phe64, Asn66, and Asn112 each coordinate tRNA.

Belongs to the PTH family. Monomer.

It is found in the cytoplasm. It carries out the reaction an N-acyl-L-alpha-aminoacyl-tRNA + H2O = an N-acyl-L-amino acid + a tRNA + H(+). Functionally, hydrolyzes ribosome-free peptidyl-tRNAs (with 1 or more amino acids incorporated), which drop off the ribosome during protein synthesis, or as a result of ribosome stalling. Catalyzes the release of premature peptidyl moieties from peptidyl-tRNA molecules trapped in stalled 50S ribosomal subunits, and thus maintains levels of free tRNAs and 50S ribosomes. The protein is Peptidyl-tRNA hydrolase of Thermoanaerobacter pseudethanolicus (strain ATCC 33223 / 39E) (Clostridium thermohydrosulfuricum).